A 180-amino-acid chain; its full sequence is UPF0149 protein XCV3523 (180 aa).

It belongs to the UPF0149 family.

The protein is UPF0149 protein XCV3523 of Xanthomonas euvesicatoria pv. vesicatoria (strain 85-10) (Xanthomonas campestris pv. vesicatoria).